A 207-amino-acid chain; its full sequence is MARSKTSHRWLKEHFDDPYVKMAQKDGYRSRASYKLLEIQEKDRILRPGMTVVDLGAAPGGWSQVTSRLIGDRGRLIASDILPMDSIPDVTFIQGDFTDDAVFALLLEAIGEQPVDLVISDMAPNMSGVKAADQPRAMYLCELALDLAGRVLRPGGDFLIKIFQGEGFDQYLRQVREGFDKVQMRKPLSSRDRSREQYLLARGFRGA.

The S-adenosyl-L-methionine site is built by Gly60, Trp62, Asp80, Asp96, and Asp121. Lys161 acts as the Proton acceptor in catalysis.

The protein belongs to the class I-like SAM-binding methyltransferase superfamily. RNA methyltransferase RlmE family.

Its subcellular location is the cytoplasm. It carries out the reaction uridine(2552) in 23S rRNA + S-adenosyl-L-methionine = 2'-O-methyluridine(2552) in 23S rRNA + S-adenosyl-L-homocysteine + H(+). In terms of biological role, specifically methylates the uridine in position 2552 of 23S rRNA at the 2'-O position of the ribose in the fully assembled 50S ribosomal subunit. This chain is Ribosomal RNA large subunit methyltransferase E, found in Azotobacter vinelandii (strain DJ / ATCC BAA-1303).